Here is a 93-residue protein sequence, read N- to C-terminus: MKTLVLLSALILLAFQVQADPIQNTDEETKTEEQPGKEDQAVSVSFGDPEGSSLQEESLRDLVCYCRTRGCKRRERMNGTCRKGHLIYTLCCR.

A signal peptide spans 1-19 (MKTLVLLSALILLAFQVQA). A propeptide spanning residues 20–58 (DPIQNTDEETKTEEQPGKEDQAVSVSFGDPEGSSLQEES) is cleaved from the precursor. Positions 24–54 (NTDEETKTEEQPGKEDQAVSVSFGDPEGSSL) are disordered. The span at 27–40 (EETKTEEQPGKEDQ) shows a compositional bias: basic and acidic residues. Cystine bridges form between Cys64–Cys92, Cys66–Cys81, and Cys71–Cys91.

This sequence belongs to the alpha-defensin family.

Its subcellular location is the secreted. Functionally, may have microbicidal activities. In Mus musculus (Mouse), this protein is Alpha-defensin 23 (Defa23).